Reading from the N-terminus, the 351-residue chain is Ribosomal RNA large subunit methyltransferase M (351 aa).

S-adenosyl-L-methionine-binding positions include serine 186, 219-222 (APGG), aspartate 238, aspartate 258, and aspartate 274. Catalysis depends on lysine 303, which acts as the Proton acceptor.

This sequence belongs to the class I-like SAM-binding methyltransferase superfamily. RNA methyltransferase RlmE family. RlmM subfamily. Monomer.

Its subcellular location is the cytoplasm. The catalysed reaction is cytidine(2498) in 23S rRNA + S-adenosyl-L-methionine = 2'-O-methylcytidine(2498) in 23S rRNA + S-adenosyl-L-homocysteine + H(+). In terms of biological role, catalyzes the 2'-O-methylation at nucleotide C2498 in 23S rRNA. This chain is Ribosomal RNA large subunit methyltransferase M, found in Xylella fastidiosa (strain M23).